Consider the following 262-residue polypeptide: Tryptophan synthase alpha chain (262 aa).

Active-site proton acceptor residues include Glu49 and Asp60.

Belongs to the TrpA family. Tetramer of two alpha and two beta chains.

The catalysed reaction is (1S,2R)-1-C-(indol-3-yl)glycerol 3-phosphate + L-serine = D-glyceraldehyde 3-phosphate + L-tryptophan + H2O. Its pathway is amino-acid biosynthesis; L-tryptophan biosynthesis; L-tryptophan from chorismate: step 5/5. Its function is as follows. The alpha subunit is responsible for the aldol cleavage of indoleglycerol phosphate to indole and glyceraldehyde 3-phosphate. The polypeptide is Tryptophan synthase alpha chain (Aquifex aeolicus (strain VF5)).